Here is a 476-residue protein sequence, read N- to C-terminus: MNFETVIGLEVHVELKTKSKIFSSSPNAFGAPPNTQTNVIDLGYPGVLPVLNRQAVEFAMKAAMALNCEIATETKFDRKNYFYPDNPKAYQISQYDQPLGKNGWIEIEVNGKKKKIGITRIHLEEDAGKLMHTGDGYSLVDFNRQGTPLIEIVSEPDIRSPEEAYAYLEKLKAIIQYTGVSDCKMEEGSLRCDANISLRPLGSDKFGTKTELKNLNSFNFVRMGLEYEAKRQEKILLSGGVIRQETRRFDEATKTTVLMRVKEGSEDYRYFPEPDLVMLYIDDEWKERVRASIPELPDARRKRYVEEWGLPEYDAKVLTLTKEMADFFEATVANGADPKLASNWLMVEVSGYLNSEQKELHDIALTPESLAGMIKLIQNGTISSKIAKKVFKELVEHGGDPEKIVKEKGLVQISDEGALRKIVLEVLDANPQSVEDYKNGKDRALGFLVGQVMKATKGQANPPLVNKLLVEEINKR.

The protein belongs to the GatB/GatE family. GatB subfamily. As to quaternary structure, heterotrimer of A, B and C subunits.

It carries out the reaction L-glutamyl-tRNA(Gln) + L-glutamine + ATP + H2O = L-glutaminyl-tRNA(Gln) + L-glutamate + ADP + phosphate + H(+). The catalysed reaction is L-aspartyl-tRNA(Asn) + L-glutamine + ATP + H2O = L-asparaginyl-tRNA(Asn) + L-glutamate + ADP + phosphate + 2 H(+). Allows the formation of correctly charged Asn-tRNA(Asn) or Gln-tRNA(Gln) through the transamidation of misacylated Asp-tRNA(Asn) or Glu-tRNA(Gln) in organisms which lack either or both of asparaginyl-tRNA or glutaminyl-tRNA synthetases. The reaction takes place in the presence of glutamine and ATP through an activated phospho-Asp-tRNA(Asn) or phospho-Glu-tRNA(Gln). The chain is Aspartyl/glutamyl-tRNA(Asn/Gln) amidotransferase subunit B from Geobacillus thermodenitrificans (strain NG80-2).